We begin with the raw amino-acid sequence, 671 residues long: cGMP-dependent protein kinase 1 (671 aa).

Position 2 is an N-acetylserine (Ser-2). Residues 2-59 (SELEEDFAKILMLKEERIKELEKRLSEKEEEIQELKRKLHKCQSVLPVPSTHIGPRTT) adopt a coiled-coil conformation. The interval 2-102 (SELEEDFAKI…LIKEAILDND (101 aa)) is required for dimerization. The segment at 9–44 (AKILMLKEERIKELEKRLSEKEEEIQELKRKLHKCQ) is leucine-zipper. Residues 50 to 75 (PSTHIGPRTTRAQGISAEPQTYRSFH) are autoinhibitory domain. Thr-59 is subject to Phosphothreonine; by autocatalysis. Residues 103–220 (FMKNLELSQI…EYMEFLKSVP (118 aa)) are cGMP-binding, high affinity. Residues 167–170 (GELA) and 177–178 (RT) each bind 3',5'-cyclic AMP. 3',5'-cyclic GMP contacts are provided by residues 167-170 (GELA), 177-178 (RT), Arg-282, 291-294 (GEKA), 301-302 (RT), and Tyr-336. A cGMP-binding, low affinity region spans residues 221–341 (TFQSLPEEIL…SNKAYEDAEA (121 aa)). 3',5'-cyclic AMP-binding positions include 291-294 (GEKA), 301-302 (RT), and Tyr-336. In terms of domain architecture, Protein kinase spans 360–619 (FNIIDTLGVG…VKDIQKHKWF (260 aa)). ATP is bound by residues 366-374 (LGVGGFGRV) and Lys-390. Asp-484 functions as the Proton acceptor in the catalytic mechanism. Phosphothreonine is present on Thr-515. An AGC-kinase C-terminal domain is found at 620-671 (EGFNWEGLRKGTLTPPIIPSVASPTDTSNFDSFPEDNDEPPPDDNSGWDIDF). The segment at 635-671 (PIIPSVASPTDTSNFDSFPEDNDEPPPDDNSGWDIDF) is disordered. Over residues 652–661 (FPEDNDEPPP) the composition is skewed to acidic residues.

The protein belongs to the protein kinase superfamily. AGC Ser/Thr protein kinase family. cGMP subfamily. Isoform alpha: parallel homodimer or heterodimer and also heterotetramer. Interacts directly with PPP1R12A. Non-covalent dimer of dimer of PRKG1-PRKG1 and PPP1R12A-PPP1R12A. This interaction targets PRKG1 to stress fibers to mediate smooth muscle cell relaxation and vasodilation in responses to rises in cGMP. Isoform beta: antiparallel homodimer. Part of cGMP kinase signaling complex at least composed of ACTA2/alpha-actin, CNN1/calponin H1, PLN/phospholamban, PRKG1 and ITPR1. Interacts with IRAG1. Forms a stable complex with ITPR1, IRAG1, and isoform beta of PRKG1. Interacts with TRPC7 (via ankyrin repeat domain). Isoform alpha interacts with RGS2. Interacts with GTF2I. Autophosphorylation increases kinase activity. In terms of processing, 65 kDa monomer is produced by proteolytic cleavage. As to expression, primarily expressed in lung and placenta.

Its subcellular location is the cytoplasm. The enzyme catalyses L-seryl-[protein] + ATP = O-phospho-L-seryl-[protein] + ADP + H(+). The catalysed reaction is L-threonyl-[protein] + ATP = O-phospho-L-threonyl-[protein] + ADP + H(+). Its activity is regulated as follows. In the absence of cGMP, PRKG1 activity is suppressed by autoinhibitory contacts. Its function is as follows. Serine/threonine protein kinase that acts as a key mediator of the nitric oxide (NO)/cGMP signaling pathway. GMP binding activates PRKG1, which phosphorylates serines and threonines on many cellular proteins. Numerous protein targets for PRKG1 phosphorylation are implicated in modulating cellular calcium, but the contribution of each of these targets may vary substantially among cell types. Proteins that are phosphorylated by PRKG1 regulate platelet activation and adhesion, smooth muscle contraction, cardiac function, gene expression, feedback of the NO-signaling pathway, and other processes involved in several aspects of the CNS like axon guidance, hippocampal and cerebellar learning, circadian rhythm and nociception. Smooth muscle relaxation is mediated through lowering of intracellular free calcium, by desensitization of contractile proteins to calcium, and by decrease in the contractile state of smooth muscle or in platelet activation. Regulates intracellular calcium levels via several pathways: phosphorylates IRAG1 and inhibits IP3-induced Ca(2+) release from intracellular stores, phosphorylation of KCNMA1 (BKCa) channels decreases intracellular Ca(2+) levels, which leads to increased opening of this channel. PRKG1 phosphorylates the canonical transient receptor potential channel (TRPC) family which inactivates the associated inward calcium current. Another mode of action of NO/cGMP/PKGI signaling involves PKGI-mediated inactivation of the Ras homolog gene family member A (RhoA). Phosphorylation of RHOA by PRKG1 blocks the action of this protein in myriad processes: regulation of RHOA translocation; decreasing contraction; controlling vesicle trafficking, reduction of myosin light chain phosphorylation resulting in vasorelaxation. Activation of PRKG1 by NO signaling also alters gene expression in a number of tissues. In smooth muscle cells, increased cGMP and PRKG1 activity influence expression of smooth muscle-specific contractile proteins, levels of proteins in the NO/cGMP signaling pathway, down-regulation of the matrix proteins osteopontin and thrombospondin-1 to limit smooth muscle cell migration and phenotype. Regulates vasodilator-stimulated phosphoprotein (VASP) functions in platelets and smooth muscle. The chain is cGMP-dependent protein kinase 1 (PRKG1) from Homo sapiens (Human).